Reading from the N-terminus, the 307-residue chain is MLISSRIVRSSLVNVPLRLSRCFTQAHRACKEEEVNSPLSSAAEQPEQKYTHFGSKTVLKSTKQKLVGDVFSSVANRYDLMNDVMSLGIHRLWKDHFINKLDAGKRPNSTTPLNFIDVAGGSGDIAFGLLDHAESKFGDTESTMDIVDINPDMLKEGEKRAMEQGKYFKDPRVRFLVSNGEKLEEIDSDSKDIYTVSFGIRNFTDIQKGLNTAYRVLKPGGIFYCLEFSKIENPLMDFAYQQWAKVLPVMGSMIANDYDSYQYLVESIERFPDQETFKSMIEKAGFKSAGYESLTFGICAIHWGIKV.

A mitochondrion-targeting transit peptide spans 1–19 (MLISSRIVRSSLVNVPLRL). S-adenosyl-L-methionine contacts are provided by residues Ser122, Asp148, 179-180 (NG), and Ser197.

Belongs to the class I-like SAM-binding methyltransferase superfamily. MenG/UbiE family. Component of a multi-subunit COQ enzyme complex, composed of at least COQ3, COQ4, COQ5, COQ6, COQ7 and COQ9. Interacts with COQ3.

It localises to the mitochondrion inner membrane. The catalysed reaction is 2-methoxy-6-(all-trans-hexaprenyl)benzene-1,4-diol + S-adenosyl-L-methionine = 5-methoxy-2-methyl-3-(all-trans-hexaprenyl)benzene-1,4-diol + S-adenosyl-L-homocysteine + H(+). It functions in the pathway cofactor biosynthesis; ubiquinone biosynthesis. Methyltransferase required for the conversion of 2-hexaprenyl-6-methoxy-1,4-benzoquinol (DDMQH2) to 2-hexaprenyl-3-methyl-6-methoxy-1,4-benzoquinol (DMQH2). In Saccharomyces cerevisiae (strain ATCC 204508 / S288c) (Baker's yeast), this protein is 2-methoxy-6-polyprenyl-1,4-benzoquinol methylase, mitochondrial.